We begin with the raw amino-acid sequence, 129 residues long: Ig kappa chain V-IV region S107B (129 aa).

Residues 1 to 22 (MDLQVQIIXFLLISVTVIMSRG) form the signal peptide. Residues 23–45 (ENVLTQSPAIMAASLGQKVTMTC) are framework-1. Residues Cys-45 and Cys-111 are joined by a disulfide bond. The segment at 46-57 (SASSSVSSSYLH) is complementarity-determining-1. The tract at residues 58 to 72 (WYQQKSGASPKPLIH) is framework-2. The segment at 73-79 (RTSNLAS) is complementarity-determining-2. The interval 80 to 111 (GVPARFSGSGSGTSYSLTISSVEAEDDATYYC) is framework-3. The segment at 112–118 (QQWSGYP) is complementarity-determining-3. A framework-4 region spans residues 119 to 128 (FGSGTKLEIK).

The sequence is that of Ig kappa chain V-IV region S107B from Mus musculus (Mouse).